Reading from the N-terminus, the 160-residue chain is Protransforming growth factor alpha (160 aa).

The signal sequence occupies residues 1–23 (MVPSAGQFALFALGILLAVCQAL). Positions 24 to 39 (ENSTSALSADPPIAAA) are cleaved as a propeptide — removed in mature form. Topologically, residues 24 to 98 (ENSTSALSAD…AVVAASQKKQ (75 aa)) are extracellular. An N-linked (GlcNAc...) asparagine glycan is attached at Asn25. The EGF-like domain occupies 43–83 (HFNDCPDSHSQFCFHGTCRFLVQEDKPACVCHSGYVGARCE). Disulfide bonds link Cys47-Cys60, Cys55-Cys71, and Cys73-Cys82. The propeptide at 90–160 (VVAASQKKQA…TACCHSETVV (71 aa)) is removed in mature form. A helical membrane pass occupies residues 99–124 (AITALVVVSIVALAVLIITCVLIHCC). Residues 125 to 160 (QVRKHCEWCRALICRHEKPSALLKGRTACCHSETVV) lie on the Cytoplasmic side of the membrane. 2 S-palmitoyl cysteine lipidation sites follow: Cys153 and Cys154.

In terms of assembly, interacts with the PDZ domains of MAGI3, SDCBP and SNTA1. The interaction with SDCBP, is required for the targeting to the cell surface. In the endoplasmic reticulum, in its immature form (i.e. with a prosegment and lacking full N-glycosylation), interacts with CNIH. In the Golgi apparatus, may form a complex with CNIH and GORASP2. Interacts (via cytoplasmic C-terminal domain) with NKD2.

It is found in the secreted. The protein localises to the extracellular space. The protein resides in the cell membrane. TGF alpha is a mitogenic polypeptide that is able to bind to the EGF receptor/EGFR and to act synergistically with TGF beta to promote anchorage-independent cell proliferation in soft agar. The chain is Protransforming growth factor alpha (TGFA) from Sus scrofa (Pig).